The chain runs to 140 residues: Large-conductance mechanosensitive channel (140 aa).

Transmembrane regions (helical) follow at residues alanine 9–phenylalanine 29 and glycine 86–valine 106.

It belongs to the MscL family. In terms of assembly, homopentamer.

It is found in the cell inner membrane. Channel that opens in response to stretch forces in the membrane lipid bilayer. May participate in the regulation of osmotic pressure changes within the cell. The protein is Large-conductance mechanosensitive channel of Anaeromyxobacter dehalogenans (strain 2CP-1 / ATCC BAA-258).